We begin with the raw amino-acid sequence, 227 residues long: Ubiquitin-conjugating enzyme E2 6 (227 aa).

At 1–206 (MASKGAYKRL…NSKQSWVKSR (206 aa)) the chain is on the cytoplasmic side. The region spanning 5–163 (GAYKRLMKEY…FPELIDKNRE (159 aa)) is the UBC core domain. The active-site Glycyl thioester intermediate is the C87. The chain crosses the membrane as a helical span at residues 207–225 (WSIAVLVFFALALARFFGA).

It belongs to the ubiquitin-conjugating enzyme family.

It localises to the endoplasmic reticulum membrane. The catalysed reaction is S-ubiquitinyl-[E1 ubiquitin-activating enzyme]-L-cysteine + [E2 ubiquitin-conjugating enzyme]-L-cysteine = [E1 ubiquitin-activating enzyme]-L-cysteine + S-ubiquitinyl-[E2 ubiquitin-conjugating enzyme]-L-cysteine.. Its pathway is protein modification; protein ubiquitination. In terms of biological role, catalyzes the covalent attachment of ubiquitin to other proteins. Functions in degradation of misfolded or regulated proteins localized in the endoplasmic reticulum (ER) lumen or membrane via the ubiquitin-proteasome system. Cognate E2 conjugating enzyme for the doa10 ubiquitin ligase complex, which is part of the ERAD-C pathway responsible for the rapid degradation of membrane proteins with misfolded cytoplasmic domains. In Schizosaccharomyces pombe (strain 972 / ATCC 24843) (Fission yeast), this protein is Ubiquitin-conjugating enzyme E2 6 (ubc6).